The sequence spans 363 residues: Osmoprotective compounds uptake ATP-binding protein GgtA (363 aa).

In terms of domain architecture, ABC transporter spans valine 4–isoleucine 234. Glycine 36–threonine 43 provides a ligand contact to ATP.

The protein belongs to the ABC transporter superfamily. The complex is composed of two ATP-binding proteins (GgtA), two transmembrane proteins (GgtC and GgtD) and a solute-binding protein (GgtB).

It localises to the cell membrane. Functionally, part of the ABC transporter complex GgtABCD involved in the uptake of the osmoprotective compounds glucosylglycerol (GG), sucrose and trehalose. Responsible for energy coupling to the transport system. This is Osmoprotective compounds uptake ATP-binding protein GgtA from Synechocystis sp. (strain ATCC 27184 / PCC 6803 / Kazusa).